A 213-amino-acid polypeptide reads, in one-letter code: Ras-like protein rasU (213 aa).

21–28 (GDGGVGKT) contributes to the GTP binding site. The short motif at 43-51 (YDPTIEDLY) is the Effector region element. GTP-binding positions include 68–72 (DTAGQ) and 126–129 (NKSD). C210 is subject to Cysteine methyl ester. Residue C210 is the site of S-geranylgeranyl cysteine attachment. A propeptide spans 211 to 213 (KMI) (removed in mature form).

The protein belongs to the small GTPase superfamily. Ras family.

The protein resides in the cell membrane. It catalyses the reaction GTP + H2O = GDP + phosphate + H(+). Ras proteins bind GDP/GTP and possess intrinsic GTPase activity. The sequence is that of Ras-like protein rasU (rasU) from Dictyostelium discoideum (Social amoeba).